The chain runs to 201 residues: uncharacterized protein (201 aa).

Belongs to the methyltransferase superfamily.

This is an uncharacterized protein from Bacillus subtilis (strain 168).